A 328-amino-acid chain; its full sequence is Tetraacyldisaccharide 4'-kinase (328 aa).

ATP is bound at residue 55–62 (TAGGNGKT).

It belongs to the LpxK family.

The catalysed reaction is a lipid A disaccharide + ATP = a lipid IVA + ADP + H(+). The protein operates within glycolipid biosynthesis; lipid IV(A) biosynthesis; lipid IV(A) from (3R)-3-hydroxytetradecanoyl-[acyl-carrier-protein] and UDP-N-acetyl-alpha-D-glucosamine: step 6/6. Its function is as follows. Transfers the gamma-phosphate of ATP to the 4'-position of a tetraacyldisaccharide 1-phosphate intermediate (termed DS-1-P) to form tetraacyldisaccharide 1,4'-bis-phosphate (lipid IVA). The protein is Tetraacyldisaccharide 4'-kinase of Escherichia coli (strain 55989 / EAEC).